The sequence spans 150 residues: Large ribosomal subunit protein uL15 (150 aa).

Positions 1–52 (MDLSNLKPAEGSVRKNSKRIGRGEGSGKGGTATRGHKGAKSRSGYSKKIGFE) are disordered. A compositionally biased stretch (gly residues) spans 23-32 (GEGSGKGGTA).

The protein belongs to the universal ribosomal protein uL15 family. As to quaternary structure, part of the 50S ribosomal subunit.

Functionally, binds to the 23S rRNA. This chain is Large ribosomal subunit protein uL15, found in Christiangramia forsetii (strain DSM 17595 / CGMCC 1.15422 / KT0803) (Gramella forsetii).